A 213-amino-acid polypeptide reads, in one-letter code: Large ribosomal subunit protein mL67 (213 aa).

This sequence belongs to the mitochondrion-specific ribosomal protein mL67 family.

The protein resides in the nucleus. The protein localises to the mitochondrion. Transcription factor involved in regulation of RNA polymerase II-dependent transcription. Also involved in regulation of mitochondrial DNA recombination, maintenance and repair, and generation of homoplasmic cells. This is Large ribosomal subunit protein mL67 (MHR1) from Eremothecium gossypii (strain ATCC 10895 / CBS 109.51 / FGSC 9923 / NRRL Y-1056) (Yeast).